Reading from the N-terminus, the 501-residue chain is uncharacterized protein (501 aa).

Positions Glu14–Asn237 constitute a BAR domain. Residue Thr285 is modified to Phosphothreonine. Disordered stretches follow at residues Ile302–Asp321 and Ser329–Ser414. Basic and acidic residues predominate over residues Gln309–Ser320. A compositionally biased stretch (polar residues) spans Ser390 to Ser402. At Ser414 the chain carries Phosphoserine. An SH3 domain is found at Ser421–Pro487.

The protein localises to the cytoplasm. This is an uncharacterized protein from Schizosaccharomyces pombe (strain 972 / ATCC 24843) (Fission yeast).